The following is a 100-amino-acid chain: NADH-quinone oxidoreductase subunit K (100 aa).

The next 3 membrane-spanning stretches (helical) occupy residues 4–24 (MQHG…GLLI), 28–48 (LIFM…AWVV), and 60–80 (IFYL…LALL).

This sequence belongs to the complex I subunit 4L family. As to quaternary structure, NDH-1 is composed of 13 different subunits. Subunits NuoA, H, J, K, L, M, N constitute the membrane sector of the complex.

It is found in the cell membrane. The enzyme catalyses a quinone + NADH + 5 H(+)(in) = a quinol + NAD(+) + 4 H(+)(out). In terms of biological role, NDH-1 shuttles electrons from NADH, via FMN and iron-sulfur (Fe-S) centers, to quinones in the respiratory chain. The immediate electron acceptor for the enzyme in this species is believed to be ubiquinone. Couples the redox reaction to proton translocation (for every two electrons transferred, four hydrogen ions are translocated across the cytoplasmic membrane), and thus conserves the redox energy in a proton gradient. This chain is NADH-quinone oxidoreductase subunit K, found in Hamiltonella defensa subsp. Acyrthosiphon pisum (strain 5AT).